Consider the following 153-residue polypeptide: Superoxide dismutase [Cu-Zn] (153 aa).

N-linked (GlcNAc...) asparagine glycosylation is present at Asn-24. His-47, His-49, and His-64 together coordinate Cu cation. Cys-58 and Cys-147 are joined by a disulfide. Residues His-64, His-72, His-81, and Asp-84 each contribute to the Zn(2+) site. A Cu cation-binding site is contributed by His-121. The segment covering 126-137 (DLGRGGNEESKK) has biased composition (basic and acidic residues). Positions 126–145 (DLGRGGNEESKKTGNAGPRP) are disordered. A substrate-binding site is contributed by Arg-144.

It belongs to the Cu-Zn superoxide dismutase family. In terms of assembly, homodimer. Requires Cu cation as cofactor. Zn(2+) serves as cofactor.

The protein resides in the cytoplasm. The catalysed reaction is 2 superoxide + 2 H(+) = H2O2 + O2. In terms of biological role, destroys radicals which are normally produced within the cells and which are toxic to biological systems. The protein is Superoxide dismutase [Cu-Zn] of Humicola lutea.